The primary structure comprises 310 residues: Cytochrome f (310 aa).

An N-terminal signal peptide occupies residues 1–23; the sequence is MRRLIPILLGSLVLSLSILVAPA. Heme is bound by residues Y28, C48, C51, and H52. Residues 277–297 traverse the membrane as a helical segment; sequence IYGLLAFFVAVSLAQILLVLK.

Belongs to the cytochrome f family. As to quaternary structure, the 4 large subunits of the cytochrome b6-f complex are cytochrome b6, subunit IV (17 kDa polypeptide, PetD), cytochrome f and the Rieske protein, while the 4 small subunits are PetG, PetL, PetM and PetN. The complex functions as a dimer. Heme is required as a cofactor.

It is found in the cellular thylakoid membrane. Its function is as follows. Component of the cytochrome b6-f complex, which mediates electron transfer between photosystem II (PSII) and photosystem I (PSI), cyclic electron flow around PSI, and state transitions. This Prochlorococcus marinus (strain MIT 9313) protein is Cytochrome f.